We begin with the raw amino-acid sequence, 424 residues long: Histidine--tRNA ligase (424 aa).

The protein belongs to the class-II aminoacyl-tRNA synthetase family. In terms of assembly, homodimer.

It localises to the cytoplasm. It catalyses the reaction tRNA(His) + L-histidine + ATP = L-histidyl-tRNA(His) + AMP + diphosphate + H(+). In Salmonella paratyphi B (strain ATCC BAA-1250 / SPB7), this protein is Histidine--tRNA ligase.